Consider the following 126-residue polypeptide: NADH-quinone oxidoreductase subunit A (126 aa).

A run of 3 helical transmembrane segments spans residues 11–31 (IAIQ…SSWL), 64–84 (FLVA…YPWA), and 98–118 (EGFV…IYVI).

Belongs to the complex I subunit 3 family. As to quaternary structure, NDH-1 is composed of 14 different subunits. Subunits NuoA, H, J, K, L, M, N constitute the membrane sector of the complex.

The protein localises to the cell inner membrane. It catalyses the reaction a quinone + NADH + 5 H(+)(in) = a quinol + NAD(+) + 4 H(+)(out). Its function is as follows. NDH-1 shuttles electrons from NADH, via FMN and iron-sulfur (Fe-S) centers, to quinones in the respiratory chain. The immediate electron acceptor for the enzyme in this species is believed to be a menaquinone. Couples the redox reaction to proton translocation (for every two electrons transferred, four hydrogen ions are translocated across the cytoplasmic membrane), and thus conserves the redox energy in a proton gradient. This chain is NADH-quinone oxidoreductase subunit A, found in Cytophaga hutchinsonii (strain ATCC 33406 / DSM 1761 / CIP 103989 / NBRC 15051 / NCIMB 9469 / D465).